An 85-amino-acid chain; its full sequence is Omega-conotoxin-like Am6.5 (85 aa).

The N-terminal stretch at 1-19 is a signal peptide; the sequence is MCILIVAVLFLTAWTFVMA. Residues 20–53 constitute a propeptide that is removed on maturation; the sequence is DDPRDEPDTVVRGGKLFSRARDEMNPAASKLNER. Disulfide bonds link Cys55–Cys73, Cys62–Cys77, and Cys72–Cys81. Glutamine amide is present on Gln84.

The protein belongs to the conotoxin O1 family. In terms of processing, is not hydroxylated. Expressed by the venom duct.

It localises to the secreted. In terms of biological role, omega-conotoxins act at presynaptic membranes, they bind and block voltage-gated calcium channels (Cav). This Conus amadis (Amadis cone) protein is Omega-conotoxin-like Am6.5.